The chain runs to 285 residues: NADPH-dependent 7-cyano-7-deazaguanine reductase (285 aa).

Residue 91 to 93 participates in substrate binding; the sequence is IES. 93 to 94 contacts NADPH; the sequence is SK. The active-site Thioimide intermediate is the Cys192. Asp199 serves as the catalytic Proton donor. A substrate-binding site is contributed by 231 to 232; the sequence is HE. An NADPH-binding site is contributed by 260-261; it reads RG.

Belongs to the GTP cyclohydrolase I family. QueF type 2 subfamily. Homodimer.

Its subcellular location is the cytoplasm. The catalysed reaction is 7-aminomethyl-7-carbaguanine + 2 NADP(+) = 7-cyano-7-deazaguanine + 2 NADPH + 3 H(+). It participates in tRNA modification; tRNA-queuosine biosynthesis. In terms of biological role, catalyzes the NADPH-dependent reduction of 7-cyano-7-deazaguanine (preQ0) to 7-aminomethyl-7-deazaguanine (preQ1). The sequence is that of NADPH-dependent 7-cyano-7-deazaguanine reductase from Psychromonas ingrahamii (strain DSM 17664 / CCUG 51855 / 37).